The chain runs to 296 residues: Phosphatidylglycerol--prolipoprotein diacylglyceryl transferase (296 aa).

The next 4 helical transmembrane spans lie at 10 to 30, 57 to 77, 92 to 112, and 119 to 139; these read IAFSLGPVKVHWYGLMYLAAF, LLFYGMLGVVLGGRIGYMLFY, VWEGGMSFHGGLLGVLVACWL, and LHFFDVMDFVAPLVPLGLGFG. Arginine 140 serves as a coordination point for a 1,2-diacyl-sn-glycero-3-phospho-(1'-sn-glycerol). The next 3 helical transmembrane spans lie at 194–214, 220–240, and 254–274; these read QLYEAALEGVVMFVVLWTFSM, YALSGLFALLYGVFRFIVEFV, and WLTMGQILSLPLIAVGLALLA.

This sequence belongs to the Lgt family.

It is found in the cell inner membrane. It carries out the reaction L-cysteinyl-[prolipoprotein] + a 1,2-diacyl-sn-glycero-3-phospho-(1'-sn-glycerol) = an S-1,2-diacyl-sn-glyceryl-L-cysteinyl-[prolipoprotein] + sn-glycerol 1-phosphate + H(+). It functions in the pathway protein modification; lipoprotein biosynthesis (diacylglyceryl transfer). In terms of biological role, catalyzes the transfer of the diacylglyceryl group from phosphatidylglycerol to the sulfhydryl group of the N-terminal cysteine of a prolipoprotein, the first step in the formation of mature lipoproteins. This Xanthomonas oryzae pv. oryzae (strain MAFF 311018) protein is Phosphatidylglycerol--prolipoprotein diacylglyceryl transferase.